Reading from the N-terminus, the 292-residue chain is 4-hydroxy-tetrahydrodipicolinate synthase (292 aa).

Threonine 44 is a binding site for pyruvate. Residue tyrosine 132 is the Proton donor/acceptor of the active site. The Schiff-base intermediate with substrate role is filled by lysine 160. Position 202 (isoleucine 202) interacts with pyruvate.

Belongs to the DapA family. As to quaternary structure, homotetramer; dimer of dimers.

It localises to the cytoplasm. It carries out the reaction L-aspartate 4-semialdehyde + pyruvate = (2S,4S)-4-hydroxy-2,3,4,5-tetrahydrodipicolinate + H2O + H(+). It functions in the pathway amino-acid biosynthesis; L-lysine biosynthesis via DAP pathway; (S)-tetrahydrodipicolinate from L-aspartate: step 3/4. In terms of biological role, catalyzes the condensation of (S)-aspartate-beta-semialdehyde [(S)-ASA] and pyruvate to 4-hydroxy-tetrahydrodipicolinate (HTPA). This is 4-hydroxy-tetrahydrodipicolinate synthase from Magnetococcus marinus (strain ATCC BAA-1437 / JCM 17883 / MC-1).